Here is a 227-residue protein sequence, read N- to C-terminus: Probable cell wall protein PGA42 (227 aa).

A signal peptide spans 1–16 (MKFIILLFALIHITVA). Asn192 is a glycosylation site (N-linked (GlcNAc...) asparagine). The GPI-anchor amidated serine moiety is linked to residue Ser200. The propeptide at 201 to 227 (GSQIFVLCVISVVGFIFFFLFFLSLFV) is removed in mature form.

It belongs to the IHD1 family. Post-translationally, the GPI-anchor is attached to the protein in the endoplasmic reticulum and serves to target the protein to the cell surface. There, the glucosamine-inositol phospholipid moiety is cleaved off and the GPI-modified mannoprotein is covalently attached via its lipidless GPI glycan remnant to the 1,6-beta-glucan of the outer cell wall layer.

It localises to the secreted. The protein localises to the cell wall. The protein resides in the membrane. Probable GPI-anchored cell wall protein that may be involved in cell wall organization, hyphal growth, as well as in virulence. The polypeptide is Probable cell wall protein PGA42 (PGA42) (Candida albicans (strain SC5314 / ATCC MYA-2876) (Yeast)).